The sequence spans 447 residues: Phosphoglucosamine mutase (447 aa).

The active-site Phosphoserine intermediate is S100. Residues S100, D239, D241, and D243 each contribute to the Mg(2+) site. Residue S100 is modified to Phosphoserine.

It belongs to the phosphohexose mutase family. Requires Mg(2+) as cofactor. Post-translationally, activated by phosphorylation.

The catalysed reaction is alpha-D-glucosamine 1-phosphate = D-glucosamine 6-phosphate. Catalyzes the conversion of glucosamine-6-phosphate to glucosamine-1-phosphate. The polypeptide is Phosphoglucosamine mutase (Dictyoglomus turgidum (strain DSM 6724 / Z-1310)).